A 492-amino-acid chain; its full sequence is Transcript termination protein A18 (492 aa).

Positions 100 to 256 (MIELKRPLYI…NSIINIAKLS (157 aa)) constitute a Helicase ATP-binding domain. 113–120 (LACGFGKT) is an ATP binding site. Positions 206-209 (DESH) match the DESH box motif.

Belongs to the helicase family. Poxviruses subfamily. Interacts with G2. Might be part of a transcription complex composed at least of G2, A18, and H5.

The protein localises to the virion. DNA helicase which seems to act as a postreplicative transcription termination factor. Involved in ATP-dependent release of nascent RNA. Forms a stable complex with single-stranded DNA, and to a lesser extent RNA. The chain is Transcript termination protein A18 from Bos taurus (Bovine).